The following is a 589-amino-acid chain: Proline--tRNA ligase (589 aa).

Belongs to the class-II aminoacyl-tRNA synthetase family. ProS type 1 subfamily. As to quaternary structure, homodimer.

It localises to the cytoplasm. It carries out the reaction tRNA(Pro) + L-proline + ATP = L-prolyl-tRNA(Pro) + AMP + diphosphate. Functionally, catalyzes the attachment of proline to tRNA(Pro) in a two-step reaction: proline is first activated by ATP to form Pro-AMP and then transferred to the acceptor end of tRNA(Pro). As ProRS can inadvertently accommodate and process non-cognate amino acids such as alanine and cysteine, to avoid such errors it has two additional distinct editing activities against alanine. One activity is designated as 'pretransfer' editing and involves the tRNA(Pro)-independent hydrolysis of activated Ala-AMP. The other activity is designated 'posttransfer' editing and involves deacylation of mischarged Ala-tRNA(Pro). The misacylated Cys-tRNA(Pro) is not edited by ProRS. The protein is Proline--tRNA ligase of Nocardioides sp. (strain ATCC BAA-499 / JS614).